A 385-amino-acid polypeptide reads, in one-letter code: Glucans biosynthesis protein C (385 aa).

The next 10 membrane-spanning stretches (helical) occupy residues 17–37, 60–80, 91–111, 137–157, 173–193, 212–232, 239–259, 274–294, 311–331, and 338–358; these read AWLM…SHTW, MQVF…RYPL, VGIP…IMLQ, ISHL…VWIF, KFSM…YAVI, FIVM…LAFI, LFTT…VAYL, TESV…FSFG, ASLF…AYIT, and WLGF…LYEI.

The protein belongs to the acyltransferase 3 family. OpgC subfamily.

Its subcellular location is the cell membrane. It participates in glycan metabolism; osmoregulated periplasmic glucan (OPG) biosynthesis. Functionally, necessary for the succinyl substitution of periplasmic glucans. Could catalyze the transfer of succinyl residues from the cytoplasmic side of the membrane to the nascent glucan backbones on the periplasmic side of the membrane. The chain is Glucans biosynthesis protein C from Escherichia coli (strain SMS-3-5 / SECEC).